Consider the following 149-residue polypeptide: Large ribosomal subunit protein uL15 (149 aa).

2 stretches are compositionally biased toward basic residues: residues 1-14 and 21-30; these read MPSR…HRGH and RIGKHRKHPG. The disordered stretch occupies residues 1–39; that stretch reads MPSRFTKTRKHRGHVSAGKGRIGKHRKHPGGRGMAGGQH. Short sequence motifs (nuclear localization signal) lie at residues 7–13 and 24–30; these read KTRKHRG and KHRKHPG. A Glycyl lysine isopeptide (Lys-Gly) (interchain with G-Cter in ubiquitin) cross-link involves residue Lys-96.

It belongs to the universal ribosomal protein uL15 family. Component of the large ribosomal subunit (LSU). Mature yeast ribosomes consist of a small (40S) and a large (60S) subunit. The 40S small subunit contains 1 molecule of ribosomal RNA (18S rRNA) and 33 different proteins (encoded by 57 genes). The large 60S subunit contains 3 rRNA molecules (25S, 5.8S and 5S rRNA) and 46 different proteins (encoded by 81 genes).

Its subcellular location is the cytoplasm. In terms of biological role, component of the ribosome, a large ribonucleoprotein complex responsible for the synthesis of proteins in the cell. The small ribosomal subunit (SSU) binds messenger RNAs (mRNAs) and translates the encoded message by selecting cognate aminoacyl-transfer RNA (tRNA) molecules. The large subunit (LSU) contains the ribosomal catalytic site termed the peptidyl transferase center (PTC), which catalyzes the formation of peptide bonds, thereby polymerizing the amino acids delivered by tRNAs into a polypeptide chain. The nascent polypeptides leave the ribosome through a tunnel in the LSU and interact with protein factors that function in enzymatic processing, targeting, and the membrane insertion of nascent chains at the exit of the ribosomal tunnel. This is Large ribosomal subunit protein uL15 from Saccharomyces cerevisiae (strain ATCC 204508 / S288c) (Baker's yeast).